We begin with the raw amino-acid sequence, 96 residues long: uncharacterized protein (96 aa).

The CBS domain maps to 57 to 96 (MTKKVRTTKKDASISDAAALMDKHNVNRLPVVDENNKLVL).

This is an uncharacterized protein from Methanobacterium ivanovii.